Reading from the N-terminus, the 303-residue chain is Glycine--tRNA ligase alpha subunit (303 aa).

It belongs to the class-II aminoacyl-tRNA synthetase family. As to quaternary structure, tetramer of two alpha and two beta subunits.

Its subcellular location is the cytoplasm. The catalysed reaction is tRNA(Gly) + glycine + ATP = glycyl-tRNA(Gly) + AMP + diphosphate. The chain is Glycine--tRNA ligase alpha subunit (glyQ) from Helicobacter pylori (strain ATCC 700392 / 26695) (Campylobacter pylori).